We begin with the raw amino-acid sequence, 202 residues long: Na(+)-translocating NADH-quinone reductase subunit E (202 aa).

The next 6 membrane-spanning stretches (helical) occupy residues 11 to 31, 39 to 59, 79 to 99, 114 to 134, 144 to 164, and 180 to 200; these read SIFI…YLAV, MGLG…NNLL, LTFV…QILE, GIFL…LFMV, VTFG…LAGI, and LGIT…FSGI.

It belongs to the NqrDE/RnfAE family. Composed of six subunits; NqrA, NqrB, NqrC, NqrD, NqrE and NqrF.

The protein resides in the cell inner membrane. It carries out the reaction a ubiquinone + n Na(+)(in) + NADH + H(+) = a ubiquinol + n Na(+)(out) + NAD(+). Its function is as follows. NQR complex catalyzes the reduction of ubiquinone-1 to ubiquinol by two successive reactions, coupled with the transport of Na(+) ions from the cytoplasm to the periplasm. NqrA to NqrE are probably involved in the second step, the conversion of ubisemiquinone to ubiquinol. This is Na(+)-translocating NADH-quinone reductase subunit E from Maridesulfovibrio salexigens (strain ATCC 14822 / DSM 2638 / NCIMB 8403 / VKM B-1763) (Desulfovibrio salexigens).